Here is a 145-residue protein sequence, read N- to C-terminus: Large ribosomal subunit protein uL13 (145 aa).

Belongs to the universal ribosomal protein uL13 family. Part of the 50S ribosomal subunit.

This protein is one of the early assembly proteins of the 50S ribosomal subunit, although it is not seen to bind rRNA by itself. It is important during the early stages of 50S assembly. In Bacillus thuringiensis (strain Al Hakam), this protein is Large ribosomal subunit protein uL13.